Reading from the N-terminus, the 46-residue chain is Mu-segestritoxin-Sf1g (46 aa).

Disulfide bonds link Cys3/Cys19, Cys10/Cys22, Cys18/Cys42, and Cys24/Cys40. The interval 31–33 (RPW) is keys region for toxin activity.

This sequence belongs to the neurotoxin 16 (SFI) family. Expressed by the venom gland.

It localises to the secreted. Its function is as follows. Insecticidal toxin. It inhibits insect voltage-gated sodium channels (Nav) by partially blocking the channel pore in DUM neurons from the American cockroach, not by acting as a gating modifier. The inhibition is only partially reversible after prolonged washout. In vivo, the toxin causes flaccid paralysis followed by death when injected into Heliothis virescens larvae. It also causes uncoordinated movements followed by full paralysis to sheep blowflies (Lucilia cuprina). When the toxin is fused to snowdrop lectin, it is orally active against larvae of the tomato moth (Laconobia oleracea), the rice brown planthopper (Nilaparvata lugens), and the peach-potato aphid (Myzus persicae). The chain is Mu-segestritoxin-Sf1g from Segestria florentina (Tube-web spider).